We begin with the raw amino-acid sequence, 356 residues long: Poly(rC)-binding protein 1 (356 aa).

Position 1 is an N-acetylmethionine (M1). KH domains are found at residues T13–I75 and P97–I162. K115 participates in a covalent cross-link: Glycyl lysine isopeptide (Lys-Gly) (interchain with G-Cter in SUMO2). Phosphoserine occurs at positions 173, 189, 190, 246, 264, and 273. In terms of domain architecture, KH 3 spans Q279–I343.

In terms of processing, phosphorylated; lowers poly(rC)-binding activity.

It localises to the nucleus. The protein resides in the cytoplasm. Its function is as follows. Single-stranded nucleic acid binding protein that binds preferentially to oligo dC. Together with PCBP2, required for erythropoiesis, possibly by regulating mRNA splicing. The chain is Poly(rC)-binding protein 1 (PCBP1) from Bos taurus (Bovine).